The chain runs to 682 residues: MSTPAVPQDLQLPPSQRAQSAFKEQRRQKLKEHLLRRKTLFAYKQENEVLSSRGQRVVTSEDQVQEGTKALKLKTKMADKENMKRPAESKNNTVVGKHCIPLKPSNELTNSTVVIDTHKPKDSNQTPHLLLTEDDPQSQHMTLSQAFHLKNNSKKKQMTTEKQKQDANMPKKPVLGSYRGQIVQSKINSFRKPLQVKDESSAATKKLSATIPKATKPQPVNTSNATVKSNRSSNMTATTKFVSTTSQNTQLVRPPIRSHHSNTQDTVKQGISRTSANVTIRKGPREKELLQSKTALSSVKTSSSQGIIRNKTLSRCIASEVVARPASLSNDKLTEKSEPVDQRRHTAGKASVDSRSAQPKETSEERKARLNEWKAGKGRVLKRPPNSVVTQHEPEGQNEKPVGSFWTTMAEEDEQRLFTEKVNNTFSECLNLINEGCPKGDILITLNDLIKNIPDAKKLVKYWICLALIEPITSPIENIIAIYEKAILAGAQPIEEMRHTIVDILTMKSQEKANLGENMEKSCASKEEVKEVSIEDTGVDVDPEKLEMESKHHRNLLFQDCEKEQDNKTKDPTHDVKTPNTETRTSCLIKYNVSTTPYLQSVKKKVQFDETNSAFKELKFLTPVRRSRRLQEKTSKLPDMLKDHYPCVSSLEQLTELGRETDAFVCRPNAALCRVYYEADTT.

2 disordered regions span residues 1-28 (MSTPAVPQDLQLPPSQRAQSAFKEQRRQ) and 152-174 (NSKKKQMTTEKQKQDANMPKKPV). Phosphoserine is present on residues S177 and S189. 2 disordered regions span residues 208–305 (SATI…SSSQ) and 326–402 (ASLS…EKPV). Polar residues-rich tracts occupy residues 218–251 (QPVNTSNATVKSNRSSNMTATTKFVSTTSQNTQL), 261–278 (SNTQDTVKQGISRTSANV), and 291–305 (QSKTALSSVKTSSSQ). Basic and acidic residues-rich tracts occupy residues 332 to 344 (KLTEKSEPVDQRR) and 361 to 375 (ETSEERKARLNEWKA). Residue S533 is modified to Phosphoserine. Residues 557-581 (LFQDCEKEQDNKTKDPTHDVKTPNT) are disordered. The segment covering 560-577 (DCEKEQDNKTKDPTHDVK) has biased composition (basic and acidic residues). Phosphothreonine occurs at positions 578 and 581. S594 carries the phosphoserine modification. Residues T595 and T596 each carry the phosphothreonine modification. Y598 carries the post-translational modification Phosphotyrosine. Phosphoserine is present on S601.

It belongs to the CKAP2 family. In terms of assembly, associates with alpha- and beta-tubulins.

The protein localises to the cytoplasm. It is found in the cytoskeleton. Its function is as follows. Possesses microtubule stabilizing properties. Involved in regulating aneuploidy, cell cycling, and cell death in a p53/TP53-dependent manner. This Pongo abelii (Sumatran orangutan) protein is Cytoskeleton-associated protein 2 (CKAP2).